Here is a 2287-residue protein sequence, read N- to C-terminus: MDNPRVKYLEELILALKSAGTVGNGIELDSTLQLDEKNGKLLQTLLKNTQSTNTDEVIFHKSFQALDLFLRCNQHLFSANVKEITMIEVILNNMVSCSLMHWSNMQYIWLINKYVSAWLKAYSFASTSNLQIWFTEQMVQYEKLLVTCLRGKLEKPTFHSLLKKIVIVNGWIMRDGLLRNYSYRRWQSQFQKLMRLLAFVLKSTNEPSVEVASILQLLVRYISLSKESLSIFRFSFDLIQTLIKDHHQHISPTILAKTLLRTLYLCIHDESKLAEIKNTFELHEWINTNKNADPLFIRSIKYVSVKLGFLESMEEFTFSNKQLHWLHQAIENPKLRLVSGNVRNCIADSADIRSFYDKVKESLLNTIKDGDTAKLTHSMHSIRQLAIKEKFVNNNLVRSPQVEFNASQNMRLSSLNLVPLHKSLAFQLLAKHVIKSIPITDMPEAMLTGVVLILIEVFSRFEPPKLEETSDLIQQSDGYGCLQVFQRASNSRSRFLRLLSVRLLPYFASLGSKYEDINLKFLIIFLQKPKAPYLTETLHMSWINLIINCNSEYFDDLLLKLIDLFNSSDFAEHTMMAAQLRYLSKIQGKSPYQLLSPILPVLFKKMGRSLVEKKLGLQRIVQLVDYPAKTLLENFQRYVVPSALGQYKSDVITEVARIMSGNDKSLVEEKKLKLLDRNSRQIFAVALVKHGFFSIETIQTLFLNTAPKFRKNYITLYLPDYKTLAEVLKMSKQILTLDGQITETERCVLSSLRFLLITNFSKDKRRGTRFKNIEDWNEEMEEQFQQKLEQNVLGIFQVFSNDMHDSDGKTSYYEKLRVLNGISFLMKYASKKSIISALAQLSICLQTGSEIPEIQHNTLECWHLLIKLLNEEQITAIINDLFCLILQKWSTFSSSCKLECQAIFDTLLKDRQKLVLEGRPFILLAFLNNPEFQVLERHPTVARKVLKVISTTNWLKVFTENLGSNNRYVILQTLLELEKYFSTTIHRKHVDVVTKHDDSSHLSTLLGALLDSTYKFRNRDLKICQIAASCISLIGLLDVTKHALPRNTNLSEEICDFNNHSQTVKFLISIVNNILVPAFWQSENPTKQLFVALVMQESLKYCGLSSVNWDINRPDDYPVEAKLWSRFNDISKTTLFPLLSSLYLAQSWKEYVPLSYPSFKVKDGYQVWIRNLTLDLLKIGTEEDHPLHVFSSLIREDDGTLSNFLLPFITMDIILRANKHNEYSKIIENLSIEFEFIFNFDLQQLNHFQIDSLKMAYNTIFRVYEYCKKWVSSFKQDYQAANGTYMIQEDKVLQVLDRTERFVNTIPSDTLAKKSLETDSFERSALYLEQSYREHGTSSLASTDLLQCIQNTYAEIGDVDAVGGVLKMFSTGNLTTKIEELQYSKNWKMAQDCFEALGDFKLSANSTTSSELVKSSNMKMLKSMYSHQLYEELLMKVKVHLPETKGFLVDNDGDLLNMGIEAVSQTGNIVELTRWIERVEHIQMFNDPSLLLHYNIAKVLQAVSRNQQQNVERYINKCFTLIGAQFTIPSTSTTLLKNREVLQKLHALTDIKLLCSAHTQSEFSNASKALDGRLSHVGSDFSPNHYLLSIRKTVEIISKNQHLQNDISNVYFQLSQLDRKENRLDLAAEDLMNALKYNHHSAELEFAEILWKQGEKDMALKTVAEITKRFKDDPSTASSENQDFKEVLLKYTEWLDLSNSSVSEQIIKQYNELIRFDKNWDAPFYSMGLYYSKLLEKKKAEGYVSDGSLEYRSITNFLTSFEKGSPNIRQSLPKVVTLWLDTAKNDVNNSISDVSNYSSRICNKIDTAVKNCGIHIWYTVLTQLLSRLMHPHTATIHTIVNILFHMTLEYPSVMLWYISILLNSESLERRNIGKQIVEAFQKKNPRTKLPGTAISLVQSLTRVCIKDVKNTASRSGRSIDSDFKFNLELAPNDMCVPVNINLKKLLPSTATSMNSDLFKSVMVSIARFSSQYMVFNSLKKPKKLTVIGSDGNIYGIMCKKEDVRQDNQYMQFANTMSFLLSKDVESRKRNLGITTYGVLSLREDCGLLEIVPNVVTLRSLLSMKYESMKIKYSLKSLQEKWQSIPSDQKLAFHKDCLKKFPPVLYQWFLDNFPDPITWYNARNGFVRSYSVMAMVGHILGLGDRHCENILLDVLTGRVLHVDFDCLFEKGKKLPVPEIVPFRLTQNITDAFGIIGTEGTFKKSSEVTLRVMRNNEIGLVNIIETIMYDRKIDESIQNALKVLRDKIRGIDARDGLALSVSGQVEALTQESCSVENLSKMYIGWLPFW.

An FAT domain is found at 1310–1864; it reads TLAKKSLETD…LWYISILLNS (555 aa). Residues 1968-2271 form the PI3K/PI4K catalytic domain; that stretch reads FSSQYMVFNS…QVEALTQESC (304 aa). The segment at 1974-1980 is G-loop; that stretch reads VFNSLKK. The catalytic loop stretch occupies residues 2140-2148; it reads GLGDRHCEN. An activation loop region spans residues 2160 to 2184; sequence HVDFDCLFEKGKKLPVPEIVPFRLT. In terms of domain architecture, FATC spans 2255–2287; it reads LALSVSGQVEALTQESCSVENLSKMYIGWLPFW.

This sequence belongs to the PI3/PI4-kinase family. ATM subfamily.

It localises to the nucleus. It catalyses the reaction L-seryl-[protein] + ATP = O-phospho-L-seryl-[protein] + ADP + H(+). It carries out the reaction L-threonyl-[protein] + ATP = O-phospho-L-threonyl-[protein] + ADP + H(+). Functionally, serine/threonine protein kinase which activates checkpoint signaling upon genotoxic stresses such as ionizing radiation (IR), ultraviolet light (UV), or DNA replication stalling, thereby acting as a DNA damage sensor. Recognizes the substrate consensus sequence [ST]-Q. Recruited to DNA lesions in order to initiate the DNA repair by homologous recombination. Phosphorylates histone H2A to form H2AS128ph (gamma-H2A) at sites of DNA damage, also involved in the regulation of DNA damage response mechanism. Required for cell growth and meiotic recombination. This is Serine/threonine-protein kinase MEC1 (MEC1) from Kluyveromyces lactis (strain ATCC 8585 / CBS 2359 / DSM 70799 / NBRC 1267 / NRRL Y-1140 / WM37) (Yeast).